Consider the following 158-residue polypeptide: Putative pre-16S rRNA nuclease (158 aa).

This sequence belongs to the YqgF nuclease family.

It localises to the cytoplasm. Functionally, could be a nuclease involved in processing of the 5'-end of pre-16S rRNA. The protein is Putative pre-16S rRNA nuclease of Hahella chejuensis (strain KCTC 2396).